The primary structure comprises 159 residues: Endoribonuclease YbeY (159 aa).

Zn(2+) is bound by residues His126, His130, and His136.

It belongs to the endoribonuclease YbeY family. Zn(2+) is required as a cofactor.

It localises to the cytoplasm. Functionally, single strand-specific metallo-endoribonuclease involved in late-stage 70S ribosome quality control and in maturation of the 3' terminus of the 16S rRNA. This chain is Endoribonuclease YbeY, found in Thermodesulfovibrio yellowstonii (strain ATCC 51303 / DSM 11347 / YP87).